Reading from the N-terminus, the 407-residue chain is Peptidase T (407 aa).

H82 contributes to the Zn(2+) binding site. Residue D84 is part of the active site. D143 is a Zn(2+) binding site. The Proton acceptor role is filled by E177. Zn(2+) contacts are provided by E178, D200, and H382.

This sequence belongs to the peptidase M20B family. The cofactor is Zn(2+).

The protein localises to the cytoplasm. It carries out the reaction Release of the N-terminal residue from a tripeptide.. Cleaves the N-terminal amino acid of tripeptides. The sequence is that of Peptidase T from Streptococcus pyogenes serotype M18 (strain MGAS8232).